We begin with the raw amino-acid sequence, 252 residues long: 7-cyano-7-deazaguanine synthase (252 aa).

Residue 22-32 (FSGGQDSTTCL) participates in ATP binding. Cysteine 215, cysteine 230, cysteine 233, and cysteine 236 together coordinate Zn(2+).

The protein belongs to the QueC family. It depends on Zn(2+) as a cofactor.

It carries out the reaction 7-carboxy-7-deazaguanine + NH4(+) + ATP = 7-cyano-7-deazaguanine + ADP + phosphate + H2O + H(+). Its pathway is purine metabolism; 7-cyano-7-deazaguanine biosynthesis. Functionally, catalyzes the ATP-dependent conversion of 7-carboxy-7-deazaguanine (CDG) to 7-cyano-7-deazaguanine (preQ(0)). The protein is 7-cyano-7-deazaguanine synthase of Granulibacter bethesdensis (strain ATCC BAA-1260 / CGDNIH1).